Reading from the N-terminus, the 210-residue chain is Glycerol-3-phosphate acyltransferase (210 aa).

Helical transmembrane passes span 1-21, 53-73, 87-107, 122-142, and 147-167; these read MLLS…FPAG, GPAL…VVAA, IAWL…LPVW, VLLA…LLLL, and IVSL…LILP.

Belongs to the PlsY family. In terms of assembly, probably interacts with PlsX.

The protein resides in the cell inner membrane. It carries out the reaction an acyl phosphate + sn-glycerol 3-phosphate = a 1-acyl-sn-glycero-3-phosphate + phosphate. It functions in the pathway lipid metabolism; phospholipid metabolism. Its function is as follows. Catalyzes the transfer of an acyl group from acyl-phosphate (acyl-PO(4)) to glycerol-3-phosphate (G3P) to form lysophosphatidic acid (LPA). This enzyme utilizes acyl-phosphate as fatty acyl donor, but not acyl-CoA or acyl-ACP. This chain is Glycerol-3-phosphate acyltransferase, found in Synechococcus elongatus (strain ATCC 33912 / PCC 7942 / FACHB-805) (Anacystis nidulans R2).